The following is a 290-amino-acid chain: uncharacterized protein (290 aa).

6 helical membrane passes run 71–91 (FWSF…VKNI), 124–144 (GILI…LPGM), 155–175 (IIIG…YILV), 202–222 (FILV…LQLV), 234–254 (MFSI…VLTP), and 262–282 (ILLS…VLVV).

It belongs to the TatC family.

The protein localises to the plastid. Its subcellular location is the chloroplast membrane. This is an uncharacterized protein from Guillardia theta (Cryptophyte).